Here is a 534-residue protein sequence, read N- to C-terminus: MSSSDDEVLVWGPGFGSECGEQTSGLEAGSTAPRGPGPDPGPEPGAPQSGEGEGGDGFPDPEGFESEREVLEAGGPVLLGCEGRPGSPADDTGYVVQLSDESVAAILRQLADLDLLGIRRHMSPESHGVGDVSPLRDVEARPGSRGAAAQRCGEAARAEAGPRWVGRPRAGRAWGNPKRSTNVAVDRQWPPSVSPARLFSDSESSDECSEIQPMRVSIYPKDGGQAKLNSPKDPRDTPRHSNVQGRETLPNVPGTCLSSAPRGLISVVERQGKQGDAEQETISPPKKIQSVLWGKGGSLPSFPGVAAAAATAAAATGRLPRPSPRRKRVQEKKSLGGVSKPALGRTFPSWGRGISATPLDPATFPPISGIPLLGRSQKYASVPWGAKESKHTGAGKKSVARRARELVAATAVSGEDNDPNRDPVPKGQLATDRPWPSCPRVHHGEPSTANLSIRGGQDSGNSKPVAMNKGEVMPRGPGPSGDQKPADHHPRLKRRQQPPRRQGCPRCLVLQKEIDDLKEQLASMQYLAEKFRIL.

Disordered stretches follow at residues 1–93, 123–260, 313–349, and 383–505; these read MSSS…DDTG, SPES…LSSA, AAAT…TFPS, and PWGA…QGCP. Residues 35–45 show a composition bias toward pro residues; sequence GPGPDPGPEPG. 2 positions are modified to phosphoserine: S87 and S123. Positions 145 to 161 are enriched in low complexity; the sequence is RGAAAQRCGEAARAEAG. The segment covering 230-239 has biased composition (basic and acidic residues); that stretch reads SPKDPRDTPR.

This is an uncharacterized protein from Bos taurus (Bovine).